A 219-amino-acid polypeptide reads, in one-letter code: Ras-related protein Rab-3B (219 aa).

Position 2 is an N-acetylalanine (Ala-2). Ser-31, Ser-32, Val-33, Gly-34, Lys-35, Thr-36, Ser-37, Pro-49, and Ser-53 together coordinate GTP. Thr-36 contacts Mg(2+). A Switch 1 motif is present at residues 45-58; it reads DTFTPAFVSTVGID. Mg(2+) contacts are provided by Thr-54 and Asp-77. The Switch 2 signature appears at 78 to 96; that stretch reads TAGQERYRTITTAYYRGAM. Gly-80 is a GTP binding site. A Phosphothreonine modification is found at Thr-86. Positions 135, 136, 138, 166, and 167 each coordinate GTP. Phosphoserine occurs at positions 188 and 190. 2 S-geranylgeranyl cysteine lipidation sites follow: Cys-217 and Cys-219. Cys-219 carries the post-translational modification Cysteine methyl ester.

The protein belongs to the small GTPase superfamily. Rab family. Interacts with RIMS1, RIMS2, RPH3A and RPH3AL. The GTP-bound form interacts with GAS8/DRC4 (via coiled-coil domains). Interacts with GDI2, CHM and CHML; phosphorylation at Thr-86 disrupts these interactions. Interacts with MADD (via uDENN domain); the GTP-bound form is preferred for interaction. Requires Mg(2+) as cofactor. Post-translationally, phosphorylation of Thr-86 in the switch II region by LRRK2 prevents the association of RAB regulatory proteins, including CHM, CHML and RAB GDP dissociation inhibitor GDI2.

Its subcellular location is the cell membrane. The protein localises to the golgi apparatus. The catalysed reaction is GTP + H2O = GDP + phosphate + H(+). Its activity is regulated as follows. Regulated by guanine nucleotide exchange factors (GEFs) which promote the exchange of bound GDP for free GTP. Regulated by GTPase activating proteins (GAPs) which increase the GTP hydrolysis activity. Inhibited by GDP dissociation inhibitors (GDIs) which prevent Rab-GDP dissociation. Functionally, the small GTPases Rab are key regulators of intracellular membrane trafficking, from the formation of transport vesicles to their fusion with membranes. Rabs cycle between an inactive GDP-bound form and an active GTP-bound form that is able to recruit to membranes different sets of downstream effectors directly responsible for vesicle formation, movement, tethering and fusion. This Mesocricetus auratus (Golden hamster) protein is Ras-related protein Rab-3B (RAB3B).